Here is a 200-residue protein sequence, read N- to C-terminus: Arylesterase (200 aa).

Residues 1 to 19 (MIRLLSLVLFFCLSAASQA) form the signal peptide. Residue serine 29 is the Nucleophile of the active site. Catalysis depends on residues aspartate 176 and histidine 179.

It belongs to the 'GDSL' lipolytic enzyme family. In terms of assembly, homodimer.

The catalysed reaction is a phenyl acetate + H2O = a phenol + acetate + H(+). Favors the hydrolysis of several arylesters. This chain is Arylesterase, found in Vibrio mimicus.